Reading from the N-terminus, the 55-residue chain is uncharacterized protein (55 aa).

It localises to the plastid. This is an uncharacterized protein from Cuscuta reflexa (Southern Asian dodder).